We begin with the raw amino-acid sequence, 291 residues long: Small ribosomal subunit protein uS2 (291 aa).

Positions 255–291 are disordered; sequence AGAATGEWSEAQGAQWETGTGAPAADWAAEPAKESSW.

It belongs to the universal ribosomal protein uS2 family. As to quaternary structure, component of the small ribosomal subunit. Mature ribosomes consist of a small (40S) and a large (60S) subunit. The 40S subunit contains about 33 different proteins and 1 molecule of RNA (18S). The 60S subunit contains about 49 different proteins and 3 molecules of RNA (25S, 5.8S and 5S). Interacts with RPS21.

It is found in the cytoplasm. In terms of biological role, required for the assembly and/or stability of the 40S ribosomal subunit. Required for the processing of the 20S rRNA-precursor to mature 18S rRNA in a late step of the maturation of 40S ribosomal subunits. The polypeptide is Small ribosomal subunit protein uS2 (Podospora anserina (strain S / ATCC MYA-4624 / DSM 980 / FGSC 10383) (Pleurage anserina)).